Here is a 526-residue protein sequence, read N- to C-terminus: GMP synthase [glutamine-hydrolyzing] (526 aa).

Residues 9–207 (RILILNFGSQ…VLDICSCQGR (199 aa)) form the Glutamine amidotransferase type-1 domain. The Nucleophile role is filled by Cys-86. Catalysis depends on residues His-181 and Glu-183. Positions 208–401 (WTPNNIKENI…LGLPFHMLYR (194 aa)) constitute a GMPS ATP-PPase domain. An ATP-binding site is contributed by 235 to 241 (SGGVDST).

Homodimer.

The catalysed reaction is XMP + L-glutamine + ATP + H2O = GMP + L-glutamate + AMP + diphosphate + 2 H(+). It functions in the pathway purine metabolism; GMP biosynthesis; GMP from XMP (L-Gln route): step 1/1. Catalyzes the synthesis of GMP from XMP. The chain is GMP synthase [glutamine-hydrolyzing] from Baumannia cicadellinicola subsp. Homalodisca coagulata.